Consider the following 227-residue polypeptide: Cytochrome c oxidase subunit 2 (227 aa).

Residues 1 to 14 (MAYPFQLGLQDATS) are Mitochondrial intermembrane-facing. A helical membrane pass occupies residues 15-45 (PIMEELTNFHDHTLMIVFLISSLVLYIISLM). At 46-59 (LTTKLTHTSTMDAQ) the chain is on the mitochondrial matrix side. Residues 60–87 (EVETIWTILPAVILILIALPSLRILYMM) form a helical membrane-spanning segment. Topologically, residues 88 to 227 (DEINNPVLTV…HFENWSTSMI (140 aa)) are mitochondrial intermembrane. Cu cation is bound by residues His161, Cys196, Glu198, Cys200, His204, and Met207. Glu198 lines the Mg(2+) pocket.

The protein belongs to the cytochrome c oxidase subunit 2 family. As to quaternary structure, component of the cytochrome c oxidase (complex IV, CIV), a multisubunit enzyme composed of 14 subunits. The complex is composed of a catalytic core of 3 subunits MT-CO1, MT-CO2 and MT-CO3, encoded in the mitochondrial DNA, and 11 supernumerary subunits COX4I, COX5A, COX5B, COX6A, COX6B, COX6C, COX7A, COX7B, COX7C, COX8 and NDUFA4, which are encoded in the nuclear genome. The complex exists as a monomer or a dimer and forms supercomplexes (SCs) in the inner mitochondrial membrane with NADH-ubiquinone oxidoreductase (complex I, CI) and ubiquinol-cytochrome c oxidoreductase (cytochrome b-c1 complex, complex III, CIII), resulting in different assemblies (supercomplex SCI(1)III(2)IV(1) and megacomplex MCI(2)III(2)IV(2)). Found in a complex with TMEM177, COA6, COX18, COX20, SCO1 and SCO2. Interacts with TMEM177 in a COX20-dependent manner. Interacts with COX20. Interacts with COX16. Cu cation is required as a cofactor.

The protein localises to the mitochondrion inner membrane. It carries out the reaction 4 Fe(II)-[cytochrome c] + O2 + 8 H(+)(in) = 4 Fe(III)-[cytochrome c] + 2 H2O + 4 H(+)(out). Functionally, component of the cytochrome c oxidase, the last enzyme in the mitochondrial electron transport chain which drives oxidative phosphorylation. The respiratory chain contains 3 multisubunit complexes succinate dehydrogenase (complex II, CII), ubiquinol-cytochrome c oxidoreductase (cytochrome b-c1 complex, complex III, CIII) and cytochrome c oxidase (complex IV, CIV), that cooperate to transfer electrons derived from NADH and succinate to molecular oxygen, creating an electrochemical gradient over the inner membrane that drives transmembrane transport and the ATP synthase. Cytochrome c oxidase is the component of the respiratory chain that catalyzes the reduction of oxygen to water. Electrons originating from reduced cytochrome c in the intermembrane space (IMS) are transferred via the dinuclear copper A center (CU(A)) of subunit 2 and heme A of subunit 1 to the active site in subunit 1, a binuclear center (BNC) formed by heme A3 and copper B (CU(B)). The BNC reduces molecular oxygen to 2 water molecules using 4 electrons from cytochrome c in the IMS and 4 protons from the mitochondrial matrix. The protein is Cytochrome c oxidase subunit 2 (MT-CO2) of Praomys taitae (Taita hill rat).